The following is a 396-amino-acid chain: Elongation factor Tu (396 aa).

The tr-type G domain maps to 10–206; the sequence is KPHVNVGTIG…AMDEYIPTPE (197 aa). The G1 stretch occupies residues 19–26; sequence GHVDHGKT. 19-26 is a GTP binding site; it reads GHVDHGKT. Mg(2+) is bound at residue T26. The segment at 60–64 is G2; it reads GITIA. The G3 stretch occupies residues 81–84; that stretch reads DCPG. GTP is bound by residues 81 to 85 and 136 to 139; these read DCPGH and NKAD. The tract at residues 136-139 is G4; the sequence is NKAD. The segment at 174-176 is G5; that stretch reads SAL.

It belongs to the TRAFAC class translation factor GTPase superfamily. Classic translation factor GTPase family. EF-Tu/EF-1A subfamily. In terms of assembly, monomer.

The protein localises to the cytoplasm. The enzyme catalyses GTP + H2O = GDP + phosphate + H(+). Functionally, GTP hydrolase that promotes the GTP-dependent binding of aminoacyl-tRNA to the A-site of ribosomes during protein biosynthesis. In Alkalilimnicola ehrlichii (strain ATCC BAA-1101 / DSM 17681 / MLHE-1), this protein is Elongation factor Tu.